The primary structure comprises 83 residues: Large ribosomal subunit protein bL31B (83 aa).

The protein belongs to the bacterial ribosomal protein bL31 family. Type B subfamily. Part of the 50S ribosomal subunit.

In terms of biological role, binds the 23S rRNA. The sequence is that of Large ribosomal subunit protein bL31B from Lactobacillus delbrueckii subsp. bulgaricus (strain ATCC 11842 / DSM 20081 / BCRC 10696 / JCM 1002 / NBRC 13953 / NCIMB 11778 / NCTC 12712 / WDCM 00102 / Lb 14).